Consider the following 84-residue polypeptide: Envelope small membrane protein (84 aa).

At 1–18 the chain is on the virion surface side; the sequence is MFMADAYFADTVWYVGQI. A helical membrane pass occupies residues 19 to 39; sequence IFIVAICLLVIIVVVAFLATF. At 40-80 the chain is on the intravirion side; the sequence is KLCIQLCGMCNTLGLSPSIYVFNRGRQFYEFYNDVKPPVLD.

This sequence belongs to the betacoronaviruses E protein family. As to quaternary structure, homopentamer. Interacts with membrane protein M in the budding compartment of the host cell, which is located between endoplasmic reticulum and the Golgi complex. Interacts with Nucleoprotein.

It localises to the host Golgi apparatus membrane. In terms of biological role, plays a central role in virus morphogenesis and assembly. Acts as a viroporin and self-assembles in host membranes forming pentameric protein-lipid pores that allow ion transport. Also plays a role in the induction of apoptosis. This is Envelope small membrane protein from Bos taurus (Bovine).